A 1254-amino-acid polypeptide reads, in one-letter code: Structural polyprotein (1254 aa).

The segment at 1–33 is necessary for nucleocapsid assembly and virus assembly; sequence MFPYQPMYPMQPMPFRNPFAAPRRPWFPRTDPF. The segment at 33 to 68 is host transcription inhibition; the sequence is FLAMQVQELARSMANLTFKQRRDVPPEGPPAKKKKK. A Supraphysiological nuclear export signal motif is present at residues 41 to 48; the sequence is LARSMANL. A disordered region spans residues 48–119; it reads LTFKQRRDVP…KPGKRQRMVM (72 aa). The Nuclear localization signal signature appears at 64–68; it reads KKKKK. 2 stretches are compositionally biased toward basic residues: residues 79-93 and 102-117; these read NGKKKNKLVKKKKKT and GGKKKVNKKPGKRQRM. Positions 91-126 are binding to the viral RNA; that stretch reads KKTGPPPQKTNGGKKKVNKKPGKRQRMVMKLESDKT. Phosphothreonine is present on T93. Residues 111 to 125 are ribosome-binding; it reads PGKRQRMVMKLESDK. Phosphoserine is present on S123. The 150-residue stretch at 125–274 folds into the Peptidase S3 domain; sequence KTFPIMLDGR…KYTPENSEQW (150 aa). Phosphothreonine is present on T126. Catalysis depends on H151, which acts as the Charge relay system. An interaction with spike glycoprotein E2 region spans residues 167–172; sequence KKASKY. Catalysis depends on charge relay system residues D173 and S225. Residues 259-263 form an interaction with spike glycoprotein E2 region; the sequence is EKGVT. The functions as an uncleaved signal peptide for the precursor of protein E3/E2 stretch occupies residues 275–286; it reads SLVTTMCLLANV. At 275 to 700 the chain is on the extracellular side; sequence SLVTTMCLLA…HYYHRYPMST (426 aa). Intrachain disulfides connect C281–C290, C352–C456, C355–C360, C423–C437, C484–C599, C533–C559, and C535–C553. N-linked (GlcNAc...) asparagine; by host glycosylation occurs at N285. N-linked (GlcNAc...) asparagine; by host glycosylation is present at N651. The helical transmembrane segment at 701-721 threads the bilayer; that stretch reads ILGLSICAAIVTTSIAASVWL. Over 722–756 the chain is Cytoplasmic; that stretch reads FCKSRISCLTPYRLTPNARMPLCLAVLCCARTARA. Residues 724 to 728 are interaction with the capsid protein; it reads KSRIS. Residues C729, C749, and C750 are each lipidated (S-palmitoyl cysteine; by host). A transient transmembrane before p62-6K protein processing region spans residues 729–749; the sequence is CLTPYRLTPNARMPLCLAVLC. C729 and C750 form a disulfide bridge. Topologically, residues 757–771 are extracellular; it reads ETTWESLDHLWNHNQ. 2 consecutive transmembrane segments (helical) span residues 772–790 and 791–811; these read QMFWSQLLIPLAALIVATR and LLKCVCCVVPFLVVAGAVGAG. Residues 812–1224 are Extracellular-facing; it reads AYEHATTMPN…SKTAWTWLTS (413 aa). 4 disulfides stabilise this stretch: C861-C926, C874-C906, C875-C908, and C880-C890. The interval 896-913 is E1 fusion peptide loop; it reads VYPFMWGGAYCFCDTENT. 2 N-linked (GlcNAc...) asparagine; by host glycosylation sites follow: N946 and N1082. 4 disulfides stabilise this stretch: C1071-C1083, C1113-C1188, C1118-C1192, and C1140-C1182. Residues 1225 to 1245 traverse the membrane as a helical segment; sequence LLGGSAIIIIIGLVLATIVAM. Residues 1246–1254 are Cytoplasmic-facing; sequence YVLTNQKHN.

Homodimer. Homomultimer. Interacts with host karyopherin KPNA4; this interaction allows the nuclear import of the viral capsid protein. Interacts with spike glycoprotein E2. Interacts with host IRAK1; the interaction leads to inhibition of IRAK1-dependent signaling. Part of a tetrameric complex composed of host CRM1, host importin alpha/beta dimer and the viral capsid; this complex blocks the receptor-mediated transport through the nuclear pore. Interacts with host phosphatase PPP1CA; this interaction dephosphorylates the capsid protein, which increases its ability to bind to the viral genome. In terms of assembly, the precursor of protein E3/E2 and E1 form a heterodimer shortly after synthesis. As to quaternary structure, interacts with spike glycoprotein E2. The precursor of protein E3/E2 and E1 form a heterodimer shortly after synthesis. Processing of the precursor of protein E3/E2 into E2 and E3 results in a heterodimer of the spike glycoproteins E2 and E1. Spike at virion surface are constituted of three E2-E1 heterodimers. After target cell attachment and endocytosis, E1 change conformation to form homotrimers. Interacts with 6K protein. Interacts with host LDLRAD3; this interaction mediates viral entry to the host cell. Interacts with spike glycoprotein E1. Processing of the precursor of protein E3/E2 into E2 and E3 results in a heterodimer of the spike glycoproteins E2 and E1. Spike at virion surface are constituted of a trimer of E2-E1 heterodimers. Interacts with 6K protein. Interacts with host LDLRAD3; this interaction mediates viral entry to the host cell. In terms of assembly, oligomer. Interacts with spike glycoprotein E1. Interacts with spike glycoprotein E2. Post-translationally, structural polyprotein: Specific enzymatic cleavages in vivo yield mature proteins. Capsid protein is auto-cleaved during polyprotein translation, unmasking a signal peptide at the N-terminus of the precursor of E3/E2. The remaining polyprotein is then targeted to the host endoplasmic reticulum, where host signal peptidase cleaves it into pE2, 6K and E1 proteins. pE2 is further processed to mature E3 and E2 by host furin in trans-Golgi vesicle. In terms of processing, phosphorylated on serine and threonine residues. Palmitoylated via thioester bonds. These palmitoylations may induce disruption of the C-terminus transmembrane. This would result in the reorientation of E2 C-terminus from lumenal to cytoplasmic side. Post-translationally, N-glycosylated. In terms of processing, palmitoylated via thioester bonds.

Its subcellular location is the virion. The protein localises to the host cytoplasm. It localises to the host cell membrane. The protein resides in the host nucleus. It is found in the virion membrane. Its subcellular location is the host Golgi apparatus. The protein localises to the host trans-Golgi network. It localises to the host endoplasmic reticulum. It catalyses the reaction Autocatalytic release of the core protein from the N-terminus of the togavirus structural polyprotein by hydrolysis of a -Trp-|-Ser- bond.. Forms an icosahedral capsid with a T=4 symmetry composed of 240 copies of the capsid protein surrounded by a lipid membrane through which penetrate 80 spikes composed of trimers of E1-E2 heterodimers. The capsid protein binds to the viral RNA genome at a site adjacent to a ribosome binding site for viral genome translation following genome release. Possesses a protease activity that results in its autocatalytic cleavage from the nascent structural protein. Following its self-cleavage, the capsid protein transiently associates with ribosomes, and within several minutes the protein binds to viral RNA and rapidly assembles into icosahedric core particles. The resulting nucleocapsid eventually associates with the cytoplasmic domain of the spike glycoprotein E2 at the cell membrane, leading to budding and formation of mature virions. In case of infection, new virions attach to target cells and after clathrin-mediated endocytosis their membrane fuses with the host endosomal membrane. This leads to the release of the nucleocapsid into the cytoplasm, followed by an uncoating event necessary for the genomic RNA to become accessible. The uncoating might be triggered by the interaction of capsid proteins with ribosomes. Binding of ribosomes would release the genomic RNA since the same region is genomic RNA-binding and ribosome-binding. Specifically inhibits interleukin-1 receptor-associated kinase 1/IRAK1-dependent signaling during viral entry, representing a means by which the alphaviruses may evade innate immune detection and activation prior to viral gene expression. Inhibits host transcription. Forms a tetrameric complex with XPO1/CRM1 and the nuclear import receptor importin. This complex blocks the central channel of host nuclear pores thereby inhibiting the receptor-mediated nuclear transport and thus the host mRNA and rRNA transcription. The inhibition of transcription is linked to a cytopathic effect on the host cell. Its function is as follows. Provides the signal sequence for the translocation of the precursor of protein E3/E2 to the host endoplasmic reticulum. Furin-cleaved E3 remains associated with spike glycoprotein E1 and mediates pH protection of the latter during the transport via the secretory pathway. After virion release from the host cell, the assembly protein E3 is gradually released in the extracellular space. In terms of biological role, plays a role in viral attachment to target host cell, by binding to the cell receptor LDLRAD3. Synthesized as a p62 precursor which is processed by furin at the cell membrane just before virion budding, giving rise to E2-E1 heterodimer. The p62-E1 heterodimer is stable, whereas E2-E1 is unstable and dissociate at low pH. p62 is processed at the last step, presumably to avoid E1 fusion activation before its final export to cell surface. E2 C-terminus contains a transitory transmembrane that would be disrupted by palmitoylation, resulting in reorientation of the C-terminal tail from lumenal to cytoplasmic side. This step is critical since E2 C-terminus is involved in budding by interacting with capsid proteins. This release of E2 C-terminus in cytoplasm occurs lately in protein export, and precludes premature assembly of particles at the endoplasmic reticulum membrane. Functionally, acts as a viroporin that participates in virus glycoprotein processing and transport to the plasma membrane, cell permeabilization and budding of viral particles. Disrupts the calcium homeostasis of the cell, probably at the endoplasmic reticulum level. This leads to cytoplasmic calcium elevation. Because of its lipophilic properties, the 6K protein is postulated to influence the selection of lipids that interact with the transmembrane domains of the glycoproteins, which, in turn, affects the deformability of the bilayer required for the extreme curvature that occurs as budding proceeds. Present in low amount in virions, about 3% compared to viral glycoproteins. Class II viral fusion protein. Fusion activity is inactive as long as E1 is bound to E2 in mature virion. After virus attachment to cell receptor LDLRAD3 and endocytosis, acidification of the endosome induce dissociation of E1/E2 heterodimer and concomitant trimerization of the E1 subunits. This E1 trimer is fusion active, and promotes release of viral nucleocapsid in cytoplasm after endosome and viral membrane fusion. Efficient fusion requires the presence of cholesterol and sphingolipid in the target membrane. The chain is Structural polyprotein from Venezuelan equine encephalitis virus (strain Mena II) (VEEV).